Here is a 3080-residue protein sequence, read N- to C-terminus: MKEHIIYQKLYGLILMSSFIFLSDTLSLKGKKLDFFGRGDTYVSLIDTIPELSRFTACIDLVFMDDNSRYWMAFSYITNNALLGREDIDLGLAGDHQQLILYRLGKTFSIRHHLASFQWHTICLIWDGVKGKLELFLNKERILEVTDQPHNLTPHGTLFLGHFLKNESSEVKSMMRSFPGSLYYFQLWDHILENEEFMKCLDGNIVSWEEDVWLVNKIIPTVDRTLRCFVPENMTIQEKSTTVSQQIDMTTPSQITGVKPQNTAHSSTLLSQSIPIFATDYTTISYSNTTSPPLETMTAQKILKTLVDETATFAVDVLSTSSAISLPTQSISIDNTTNSMKKTKSPSSESTKTTKMVEAMATEIFQPPTPSNFLSTSRFTKNSVVSTTSAIKSQSAVTKTTSLFSTIESTSMSTTPCLKQKSTNTGALPISTAGQEFIESTAAGTVPWFTVEKTSPASTHVGTASSFPPEPVLISTAAPVDSVFPRNQTAFPLATTDMKIAFTVHSLTLPTRLIETTPAPRTAETELTSTNFQDVSLPRVEDAMSTSMSKETSSKTFSFLTSFSFTGTESVQTVIDAEATRTALTPEITLASTVAETMLSSTITGRVYTQNTPTADGHLLTLMSTRSASTSKAPESGPTSTTDEAAHLFSSNETIWTSRPDQALLASMNTTTILTFVPNENFTSAFHENTTYTEYLSATTNITPLKASPEGKGTTANDATTARYTTAVSKLTSPWFANFSIVSGTTSITNMPEFKLTTLLLKTIPMSTKPANELPLTPRETVVPSVDIISTLACIQPNFSTEESASETTQTEINGAIVFGGTTTPVPKSATTQRLNATVTRKEATSHYLMRKSTIAAVAEVSPFSTMLEVTDESAQRVTASVTVSSFPDIEKLSTPLDNKTATTEVRESWLLTKLVKTTPRSSYNEMTEMFNFNHTYVAHWTSETSEGISAGSPTSGSTHIFGEPLGASTTRISETSFSTTPTDRTATSLSDGILPPQPTAAHSSATPVPVTHMFSLPVNGSSVVAEETEVTMSEPSTLARAFSTSVLSDVSNLSSTTMTTALVPPLDQTASTTIVIVPTHGDLIRTTSEATVISVRKTSMAVPSLTETPFHSLRLSTPVTAKAETTLFSTSVDTVTPSTHTLVCSKPPPDNIPPASSTHVISTTSTPEATQPISQVEETSTYALSFPYTFSGGGVVASLATGTTETSVVDETTPSHISANKLTTSVNSHISSSATYRVHTPVSIQLVTSTSVLSSDKDQMTISLGKTPRTMEVTEMSPSKNSFISYSRGTPSLEMTDTGFPETTKISSHQTHSPSEIPLGTPSDGNLASSPTSGSTQITPTLTSSNTVGVHIPEMSTSLGKTALPSQALTITTFLCPEKESTSALPAYTPRTVEMIVNSTYVTHSVSYGQDTSFVDTTTSSSTRISNPMDINTTFSHLHSLRTQPEVTSVASFISESTQTFPESLSLSTAGLYNDGFTVLSDRITTAFSVPNVPTMLPRESSMATSTPIYQMSSLPVNVTAFTSKKVSDTPPIVITKSSKTMHPGCLKSPCTATSGPMSEMSSIPVNNSAFTPATVSSDTSTRVGLFSTLLSSVTPRTTMTMQTSTLDVTPVIYAGATSKNKMVSSAFTTEMIEAPSRITPTTFLSPTEPTLPFVKTVPTTIMAGIVTPFVGTTAFSPLSSKSTGAISSIPKTTFSPFLSATQQSSQADEATTLGILSGITNRSLSTVNSGTGVALTDTYSRITVPENMLSPTHADSLHTSFNIQVSPSLTSFKSASGPTKNVKTTTNCFSSNTRKMTSLLEKTSLTNYATSLNTPVSYPPWTPSSATLPSLTSFVYSPHSTEAEISTPKTSPPPTSQMVEFPVLGTRMTSSNTQPLLMTSWNIPTAEGSQFPISTTINVPTSNEMETETLHLVPGPLSTFTASQTGLVSKDVMAMSSIPMSGILPNHGLSENPSLSTSLRAITSTLADVKHTFEKMTTSVTPGTTLPSILSGATSGSVISKSPILTWLLSSLPSGSPPATVSNAPHVMTSSTVEVSKSTFLTSDMISAHPFTNLTTLPSATMSTILTRTIPTPTLGGITTGFPTSLPMSINVTDDIVYISTHPEASSRTTITANPRTVSHPSSFSRKTMSPSTTDHTLSVGAMPLPSSTITSSWNRIPTASSPSTLIIPKPTLDSLLNIMTTTSTVPGASFPLISTGVTYPFTATVSSPISSFFETTWLDSTPSFLSTEASTSPTATKSTVSFYNVEMSFSVFVEEPRIPITSVINEFTENSLNSIFQNSEFSLATLETQIKSRDISEEEMVMDRAILEQREGQEMATISYVPYSCVCQVIIKASSSLASSELMRKIKSKIHGNFTHGNFTQDQLTLLVNCEHVAVKKLEPGNCKADETASKYKGTYKWLLTNPTETAQTRCIKNEDGNATRFCSISINTGKSQWEKPKFKQCKLLQELPDKIVDLANITISDENAEDVAEHILNLINESPALGKEETKIIVSKISDISQCDEISMNLTHVMLQIINVVLEKQNNSASDLHEISNEILRIIERTGHKMEFSGQIANLTVAGLALAVLRGDHTFDGMAFSIHSYEEGTDPEIFLGNVPVGGILASIYLPKSLTERIPLSNLQTILFNFFGQTSLFKTKNVTKALTTYVVSASISDDMFIQNLADPVVITLQHIGGNQNYGQVHCAFWDFENNNGLGGWNSSGCKVKETNVNYTICQCDHLTHFGVLMDLSRSTVDSVNEQILALITYTGCGISSIFLGVAVVTYIAFHKLRKDYPAKILINLCTALLMLNLVFLINSWLSSFQKVGVCITAAVALHYFLLVSFTWMGLEAVHMYLALVKVFNIYIPNYILKFCLVGWGIPAIMVAITVSVKKDLYGTLSPTTPFCWIKDDSIFYISVVAYFCLIFLMNLSMFCTVLVQLNSVKSQIQKTRRKMILHDLKGTMSLTFLLGLTWGFAFFAWGPMRNFFLYLFAIFNTLQGFFIFVFHCVMKESVREQWQIHLCCGWLRLDNSSDGSSRCQIKVGYKQEGLKKIFEHKLLTPSLKSTATSSTFKSLGSAQGTPSEISFPNDDFDKDPYCSSP.

The N-terminal stretch at 1–27 (MKEHIIYQKLYGLILMSSFIFLSDTLS) is a signal peptide. The Extracellular portion of the chain corresponds to 28 to 2740 (LKGKKLDFFG…SRSTVDSVNE (2713 aa)). The 200-residue stretch at 29 to 228 (KGKKLDFFGR…IPTVDRTLRC (200 aa)) folds into the Pentraxin (PTX) domain. Cystine bridges form between C58–C123 and C200–C228. Position 202 (D202) interacts with Mg(2+). Residues N233, N487, N836, and N899 are each glycosylated (N-linked (GlcNAc...) asparagine). The span at 946-959 (SEGISAGSPTSGST) shows a compositional bias: polar residues. Residues 946-965 (SEGISAGSPTSGSTHIFGEP) are disordered. An N-linked (GlcNAc...) asparagine glycan is attached at N1020. Residues 1274–1348 (VTEMSPSKNS…ITPTLTSSNT (75 aa)) form a disordered region. Composition is skewed to polar residues over residues 1277–1296 (MSPS…SLEM), 1305–1315 (TKISSHQTHSP), and 1324–1348 (SDGN…SSNT). A glycan (N-linked (GlcNAc...) asparagine) is linked at N1519. The segment covering 2109 to 2139 (SRTTITANPRTVSHPSSFSRKTMSPSTTDHT) has biased composition (polar residues). The segment at 2109–2141 (SRTTITANPRTVSHPSSFSRKTMSPSTTDHTLS) is disordered. N2361 and N2640 each carry an N-linked (GlcNAc...) asparagine glycan. Positions 2578-2734 (MAFSIHSYEE…GVLMDLSRST (157 aa)) constitute a GAIN-B domain. Intrachain disulfides connect C2685-C2716 and C2704-C2718. The interval 2685-2734 (CAFWDFENNNGLGGWNSSGCKVKETNVNYTICQCDHLTHFGVLMDLSRST) is GPS. The segment at 2723 to 2734 (HFGVLMDLSRST) is stachel. A helical membrane pass occupies residues 2741-2766 (QILALITYTGCGISSIFLGVAVVTYI). Topologically, residues 2767 to 2777 (AFHKLRKDYPA) are cytoplasmic. The helical transmembrane segment at 2778-2800 (KILINLCTALLMLNLVFLINSWL) threads the bilayer. The Extracellular segment spans residues 2801-2806 (SSFQKV). A helical transmembrane segment spans residues 2807–2835 (GVCITAAVALHYFLLVSFTWMGLEAVHMY). The cysteines at positions 2809 and 2886 are disulfide-linked. The Cytoplasmic portion of the chain corresponds to 2836 to 2849 (LALVKVFNIYIPNY). Residues 2850-2870 (ILKFCLVGWGIPAIMVAITVS) traverse the membrane as a helical segment. The Extracellular segment spans residues 2871–2892 (VKKDLYGTLSPTTPFCWIKDDS). Residues 2893–2918 (IFYISVVAYFCLIFLMNLSMFCTVLV) traverse the membrane as a helical segment. At 2919–2937 (QLNSVKSQIQKTRRKMILH) the chain is on the cytoplasmic side. A helical membrane pass occupies residues 2938-2961 (DLKGTMSLTFLLGLTWGFAFFAWG). Residues 2962 to 2965 (PMRN) are Extracellular-facing. A helical transmembrane segment spans residues 2966-2989 (FFLYLFAIFNTLQGFFIFVFHCVM). At 2990 to 3080 (KESVREQWQI…FDKDPYCSSP (91 aa)) the chain is on the cytoplasmic side. The span at 3051–3065 (FKSLGSAQGTPSEIS) shows a compositional bias: polar residues. The disordered stretch occupies residues 3051–3080 (FKSLGSAQGTPSEISFPNDDFDKDPYCSSP).

This sequence belongs to the G-protein coupled receptor 2 family. Adhesion G-protein coupled receptor (ADGR) subfamily. In terms of assembly, homodimer; homodimerizes via its Pentraxin domain in a calcium-independent manner. Heterodimer of 2 chains generated by proteolytic processing; the large extracellular N-terminal fragment and the membrane-bound C-terminal fragment predominantly remain associated and non-covalently linked. In terms of processing, autoproteolytically processed at the GPS region of the GAIN-B domain; this cleavage modulates receptor activity. Post-translationally, N-glycosylated. In terms of tissue distribution, detected in fetal retina. Highly expressed in normal enterochromaffin cells and in neuroendocrine carcinoma. Detected in normal liver; highly expressed in primary liver carcinoma.

The protein resides in the membrane. With respect to regulation, forms a heterodimer of 2 chains generated by proteolytic processing that remain associated through non-covalent interactions mediated by the GAIN-B domain. In the inactivated receptor, the Stachel sequence (also named stalk) is embedded in the GAIN-B domain, where it adopts a beta-strand conformation. On activation, the Stachel moves into the 7 transmembrane region and adopts a twisted hook-shaped configuration that forms contacts within the receptor, leading to coupling of a G-alpha protein, which activates signaling. The cleaved GAIN-B and N-terminal domains can then dissociate from the rest of the receptor. Orphan adhesion G-protein coupled receptor (aGPCR). Ligand binding causes a conformation change that triggers signaling via guanine nucleotide-binding proteins (G proteins) and modulates the activity of downstream effectors, such as adenylate cyclase. ADGRG4 is coupled to G(s) G proteins and mediates activation of adenylate cyclase activity. May be act as sensor of mechanical forces. The protein is Adhesion G-protein coupled receptor G4 of Homo sapiens (Human).